The sequence spans 230 residues: Large ribosomal subunit protein uL1c (230 aa).

The protein belongs to the universal ribosomal protein uL1 family. In terms of assembly, part of the 50S ribosomal subunit.

The protein localises to the plastid. It is found in the chloroplast. Functionally, binds directly to 23S rRNA. Might be involved in E site tRNA release (Potential). This Phaeodactylum tricornutum (strain CCAP 1055/1) protein is Large ribosomal subunit protein uL1c (rpl1).